A 557-amino-acid polypeptide reads, in one-letter code: Nucleoprotein (557 aa).

Residues 54-235 (MRKDKRSDDD…ITKEESANNI (182 aa)) form a binding site for the cap structure m7GTP region. The Mn(2+) site is built by D379 and E381. Residues E389, C496, H499, and C518 each coordinate Zn(2+). Residue D522 participates in Mn(2+) binding.

The protein belongs to the arenaviridae nucleocapsid protein family. As to quaternary structure, homomultimerizes to form the nucleocapsid. Binds to viral genomic RNA. Interacts with glycoprotein G2. Interacts with protein Z; this interaction probably directs the encapsidated genome to budding sites. Interacts with protein L; this interaction does not interfere with Z-L interaction. Interacts with host IKBKE (via Protein kinase domain); the interaction inhibits IKBKE kinase activity.

It localises to the virion. The protein resides in the host cytoplasm. Encapsidates the genome, protecting it from nucleases. The encapsidated genomic RNA is termed the nucleocapsid (NC). Serves as template for viral transcription and replication. The increased presence of protein N in host cell does not seem to trigger the switch from transcription to replication as observed in other negative strain RNA viruses. Through the interaction with host IKBKE, strongly inhibits the phosphorylation and nuclear translocation of host IRF3, a protein involved in interferon activation pathway, leading to the inhibition of interferon-beta and IRF3-dependent promoters activation. Also encodes a functional 3'-5' exoribonuclease that degrades preferentially dsRNA substrates and thereby participates in the suppression of interferon induction. In Calomys callosus (Large vesper mouse), this protein is Nucleoprotein.